Consider the following 168-residue polypeptide: Small ribosomal subunit protein uS5 (168 aa).

The region spanning 11-74 (YSEKVVKIDR…EAAKKHLVKI (64 aa)) is the S5 DRBM domain.

The protein belongs to the universal ribosomal protein uS5 family. As to quaternary structure, part of the 30S ribosomal subunit. Contacts proteins S4 and S8.

Its function is as follows. With S4 and S12 plays an important role in translational accuracy. Functionally, located at the back of the 30S subunit body where it stabilizes the conformation of the head with respect to the body. The protein is Small ribosomal subunit protein uS5 of Leptospira borgpetersenii serovar Hardjo-bovis (strain JB197).